Here is a 64-residue protein sequence, read N- to C-terminus: Defensin-like protein 123 (64 aa).

Cystine bridges form between C19-C62, C29-C49, C34-C56, and C38-C58.

It belongs to the DEFL family.

The sequence is that of Defensin-like protein 123 from Arabidopsis thaliana (Mouse-ear cress).